Here is a 446-residue protein sequence, read N- to C-terminus: MTGVAVPHRAELARQLIDARNRTLRLVDFDDAELRRQYDPLMSPLVWDLAHIGQQEELWLLRGGDPRRPGLLEPAVEQLYDAFVHPRASRVHLPLLSPAQARRFCATVRSAVLDALDRLPEDADTFAFGMVVSHEHQHDETMLQALNLRSGEPLLGSGTALPPGRPGVAGTSVLVPGGPFVLGVDLADEPYALDNERPAHVVDVPAFRIGRVPVTNAEWRAFIDDGGYRQRRWWSDAGWAYRCEAGLTAPQFWNPDGTRTRFGHVEDIPPDEPVQHVTYFEAEAYAAWAGARLPTEIEWEKACAWDPATGRRRRYPWGDAAPTAALANLGGDALRPAPVGAYPAGASACGAEQMLGDVWEWTSSPLRPWPGFTPMIYQRYSQPFFEGAGSGDYRVLRGGSWAVAADILRPSFRNWDHPIRRQIFAGVRLAWDVDRQTARPGPVGGC.

His-51 is a Fe cation binding site. Arg-87–Arg-90 contacts gamma-L-glutamyl-L-cysteine. Fe cation is bound by residues His-134 and His-138. The gamma-L-glutamyl-L-cysteine site is built by Asp-416 and Arg-420.

The protein belongs to the EgtB family. Monomer. Fe(2+) serves as cofactor.

It carries out the reaction gamma-L-glutamyl-L-cysteine + hercynine + O2 = gamma-L-glutamyl-hercynylcysteine S-oxide + H2O. It functions in the pathway amino-acid biosynthesis; ergothioneine biosynthesis. In terms of biological role, catalyzes the oxidative sulfurization of hercynine (N-alpha,N-alpha,N-alpha-trimethyl-L-histidine) into hercynyl-gamma-L-glutamyl-L-cysteine sulfoxide, a step in the biosynthesis pathway of ergothioneine. This chain is Hercynine oxygenase, found in Mycolicibacterium thermoresistibile (strain ATCC 19527 / DSM 44167 / CIP 105390 / JCM 6362 / NCTC 10409 / 316) (Mycobacterium thermoresistibile).